The primary structure comprises 391 residues: Multidrug resistance protein MdtL (391 aa).

Transmembrane regions (helical) follow at residues 4–24 (FLIC…MYLV), 42–62 (IAFS…GKVA), 69–89 (PVAI…SLAE), 93–113 (LFLA…VVAF), 131–151 (LLNG…HLIM), 158–178 (SLFW…LFIL), 203–222 (FFLS…LTFV), 245–265 (ALTA…LGIF), 269–289 (TLMI…AVSP), 293–313 (VSLF…GVAM), 331–351 (LGIA…VVGI), and 356–376 (MLIG…MFVA).

This sequence belongs to the major facilitator superfamily. DHA1 family. MdtL (TC 2.A.1.2.22) subfamily.

The protein localises to the cell inner membrane. Its function is as follows. Confers resistance to chloramphenicol. This Escherichia coli O127:H6 (strain E2348/69 / EPEC) protein is Multidrug resistance protein MdtL.